A 131-amino-acid chain; its full sequence is MLSSLKKQFDNDKEFLLNHTKEFLTTPGVGVTLETNRANIEGKNGETPILIRDGRNNPNEKIVLGTKAFEYLNAIRGAINIAKGKNKPELVLKLNKKTVKFINRFNAFNMEKSQENISKIGKLKLTVLLNC.

This is an uncharacterized protein from Rickettsia conorii (strain ATCC VR-613 / Malish 7).